Here is a 386-residue protein sequence, read N- to C-terminus: 2,3-diketo-5-methylthiopentyl-1-phosphate enolase (386 aa).

Catalysis depends on Lys-85, which acts as the Proton acceptor. Substrate-binding positions include Lys-131, 157–160 (KDDE), His-248, Gly-316, and 338–339 (GT). The Mg(2+) site is built by Lys-157, Asp-159, and Glu-160. Lys-157 carries the N6-carboxylysine modification.

It belongs to the RuBisCO large chain family. Type IV subfamily. Homodimer. It depends on Mg(2+) as a cofactor.

It catalyses the reaction 5-methylsulfanyl-2,3-dioxopentyl phosphate = 2-hydroxy-5-methylsulfanyl-3-oxopent-1-enyl phosphate. Its pathway is amino-acid biosynthesis; L-methionine biosynthesis via salvage pathway; L-methionine from S-methyl-5-thio-alpha-D-ribose 1-phosphate: step 3/6. In terms of biological role, catalyzes the enolization of 2,3-diketo-5-methylthiopentyl-1-phosphate (DK-MTP-1-P) into 2-hydroxy-3-keto-5-methylthiopentenyl-1-phosphate (HK-MTPenyl-1-P). The chain is 2,3-diketo-5-methylthiopentyl-1-phosphate enolase (mtnW) from Microcystis aeruginosa.